Consider the following 106-residue polypeptide: Ribonuclease P protein component 4 (106 aa).

Positions 62, 65, 88, and 91 each coordinate Zn(2+).

This sequence belongs to the eukaryotic/archaeal RNase P protein component 4 family. In terms of assembly, consists of a catalytic RNA component and at least 4-5 protein subunits. Zn(2+) is required as a cofactor.

The protein resides in the cytoplasm. It carries out the reaction Endonucleolytic cleavage of RNA, removing 5'-extranucleotides from tRNA precursor.. Its function is as follows. Part of ribonuclease P, a protein complex that generates mature tRNA molecules by cleaving their 5'-ends. The sequence is that of Ribonuclease P protein component 4 from Methanocorpusculum labreanum (strain ATCC 43576 / DSM 4855 / Z).